Reading from the N-terminus, the 388-residue chain is 1-deoxy-D-xylulose 5-phosphate reductoisomerase (388 aa).

Residues threonine 10, glycine 11, serine 12, isoleucine 13, lysine 37, asparagine 38, and asparagine 123 each contribute to the NADPH site. 1-deoxy-D-xylulose 5-phosphate is bound at residue lysine 124. Glutamate 125 is a binding site for NADPH. Aspartate 149 is a Mn(2+) binding site. 1-deoxy-D-xylulose 5-phosphate is bound by residues serine 150, glutamate 151, serine 175, and histidine 198. Residue glutamate 151 coordinates Mn(2+). Residue glycine 204 coordinates NADPH. 1-deoxy-D-xylulose 5-phosphate contacts are provided by serine 211, asparagine 216, lysine 217, and glutamate 220. Mn(2+) is bound at residue glutamate 220.

This sequence belongs to the DXR family. Mg(2+) serves as cofactor. The cofactor is Mn(2+).

The catalysed reaction is 2-C-methyl-D-erythritol 4-phosphate + NADP(+) = 1-deoxy-D-xylulose 5-phosphate + NADPH + H(+). The protein operates within isoprenoid biosynthesis; isopentenyl diphosphate biosynthesis via DXP pathway; isopentenyl diphosphate from 1-deoxy-D-xylulose 5-phosphate: step 1/6. In terms of biological role, catalyzes the NADPH-dependent rearrangement and reduction of 1-deoxy-D-xylulose-5-phosphate (DXP) to 2-C-methyl-D-erythritol 4-phosphate (MEP). This chain is 1-deoxy-D-xylulose 5-phosphate reductoisomerase, found in Pelagibacter ubique (strain HTCC1062).